A 201-amino-acid chain; its full sequence is Large ribosomal subunit protein uL4 (201 aa).

Residues R44–V73 form a disordered region. Residues S55 to G66 are compositionally biased toward basic residues.

This sequence belongs to the universal ribosomal protein uL4 family. Part of the 50S ribosomal subunit.

In terms of biological role, one of the primary rRNA binding proteins, this protein initially binds near the 5'-end of the 23S rRNA. It is important during the early stages of 50S assembly. It makes multiple contacts with different domains of the 23S rRNA in the assembled 50S subunit and ribosome. Its function is as follows. Forms part of the polypeptide exit tunnel. The protein is Large ribosomal subunit protein uL4 of Hamiltonella defensa subsp. Acyrthosiphon pisum (strain 5AT).